Reading from the N-terminus, the 125-residue chain is Small ribosomal subunit protein uS12 (125 aa).

A 3-methylthioaspartic acid modification is found at Asp89.

This sequence belongs to the universal ribosomal protein uS12 family. As to quaternary structure, part of the 30S ribosomal subunit. Contacts proteins S8 and S17. May interact with IF1 in the 30S initiation complex.

With S4 and S5 plays an important role in translational accuracy. In terms of biological role, interacts with and stabilizes bases of the 16S rRNA that are involved in tRNA selection in the A site and with the mRNA backbone. Located at the interface of the 30S and 50S subunits, it traverses the body of the 30S subunit contacting proteins on the other side and probably holding the rRNA structure together. The combined cluster of proteins S8, S12 and S17 appears to hold together the shoulder and platform of the 30S subunit. The sequence is that of Small ribosomal subunit protein uS12 from Clostridium botulinum (strain Alaska E43 / Type E3).